Consider the following 329-residue polypeptide: 4-hydroxythreonine-4-phosphate dehydrogenase (329 aa).

2 residues coordinate substrate: histidine 136 and threonine 137. Positions 166, 211, and 266 each coordinate a divalent metal cation. Residues lysine 274, asparagine 283, and arginine 292 each coordinate substrate.

It belongs to the PdxA family. In terms of assembly, homodimer. It depends on Zn(2+) as a cofactor. Mg(2+) is required as a cofactor. The cofactor is Co(2+).

The protein localises to the cytoplasm. The enzyme catalyses 4-(phosphooxy)-L-threonine + NAD(+) = 3-amino-2-oxopropyl phosphate + CO2 + NADH. Its pathway is cofactor biosynthesis; pyridoxine 5'-phosphate biosynthesis; pyridoxine 5'-phosphate from D-erythrose 4-phosphate: step 4/5. Catalyzes the NAD(P)-dependent oxidation of 4-(phosphooxy)-L-threonine (HTP) into 2-amino-3-oxo-4-(phosphooxy)butyric acid which spontaneously decarboxylates to form 3-amino-2-oxopropyl phosphate (AHAP). This Shigella boydii serotype 4 (strain Sb227) protein is 4-hydroxythreonine-4-phosphate dehydrogenase.